The following is a 172-amino-acid chain: Large ribosomal subunit protein uL10 (172 aa).

This sequence belongs to the universal ribosomal protein uL10 family. As to quaternary structure, part of the ribosomal stalk of the 50S ribosomal subunit. The N-terminus interacts with L11 and the large rRNA to form the base of the stalk. The C-terminus forms an elongated spine to which L12 dimers bind in a sequential fashion forming a multimeric L10(L12)X complex.

In terms of biological role, forms part of the ribosomal stalk, playing a central role in the interaction of the ribosome with GTP-bound translation factors. The protein is Large ribosomal subunit protein uL10 of Nitrobacter hamburgensis (strain DSM 10229 / NCIMB 13809 / X14).